Reading from the N-terminus, the 480-residue chain is Probable E3 ubiquitin protein ligase DRIPH (480 aa).

An RING-type zinc finger spans residues 16–57; it reads CPICTNPFKDATTISECLHTFCRSCIRNKFINERVNACPVCN. Disordered regions lie at residues 93 to 133, 167 to 193, 241 to 261, and 280 to 356; these read GPKT…EPAN, RGRKASLPKKIDSKPEPELPPKEPKIK, TPPDIVEPEISSDDDTEESVE, and VNQN…EMKV. A compositionally biased stretch (basic residues) spans 103–112; that stretch reads SSKKKRKSRT. Low complexity predominate over residues 113–133; it reads SLRVSSSRVSSSPDTPLEPAN. A compositionally biased stretch (basic and acidic residues) spans 175–193; that stretch reads KKIDSKPEPELPPKEPKIK. The segment covering 246–260 has biased composition (acidic residues); that stretch reads VEPEISSDDDTEESV. Positions 298–309 are enriched in polar residues; it reads GQKLKTNGAATS.

It catalyses the reaction S-ubiquitinyl-[E2 ubiquitin-conjugating enzyme]-L-cysteine + [acceptor protein]-L-lysine = [E2 ubiquitin-conjugating enzyme]-L-cysteine + N(6)-ubiquitinyl-[acceptor protein]-L-lysine.. Its pathway is protein modification; protein ubiquitination. This Arabidopsis thaliana (Mouse-ear cress) protein is Probable E3 ubiquitin protein ligase DRIPH.